The sequence spans 345 residues: uncharacterized protein (345 aa).

This is an uncharacterized protein from Acidianus filamentous virus 2 (isolate Italy/Pozzuoli) (AFV-2).